The following is a 144-amino-acid chain: Large ribosomal subunit protein uL15 (144 aa).

Residues 1–53 (MRLNTLSPAEGAKHAPKRVGRGIGSGLGKTAGRGHKGQNSRSGGGVRRGFEGG) form a disordered region. Gly residues predominate over residues 21-31 (RGIGSGLGKTA).

It belongs to the universal ribosomal protein uL15 family. In terms of assembly, part of the 50S ribosomal subunit.

Its function is as follows. Binds to the 23S rRNA. This Serratia proteamaculans (strain 568) protein is Large ribosomal subunit protein uL15.